The sequence spans 258 residues: Imidazole glycerol phosphate synthase subunit HisF (258 aa).

Residues Asp-11 and Asp-130 contribute to the active site.

Belongs to the HisA/HisF family. Heterodimer of HisH and HisF.

Its subcellular location is the cytoplasm. The catalysed reaction is 5-[(5-phospho-1-deoxy-D-ribulos-1-ylimino)methylamino]-1-(5-phospho-beta-D-ribosyl)imidazole-4-carboxamide + L-glutamine = D-erythro-1-(imidazol-4-yl)glycerol 3-phosphate + 5-amino-1-(5-phospho-beta-D-ribosyl)imidazole-4-carboxamide + L-glutamate + H(+). It functions in the pathway amino-acid biosynthesis; L-histidine biosynthesis; L-histidine from 5-phospho-alpha-D-ribose 1-diphosphate: step 5/9. Its function is as follows. IGPS catalyzes the conversion of PRFAR and glutamine to IGP, AICAR and glutamate. The HisF subunit catalyzes the cyclization activity that produces IGP and AICAR from PRFAR using the ammonia provided by the HisH subunit. The sequence is that of Imidazole glycerol phosphate synthase subunit HisF from Sodalis glossinidius (strain morsitans).